We begin with the raw amino-acid sequence, 380 residues long: Cystathionine gamma-synthase (380 aa).

Lysine 195 is modified (N6-(pyridoxal phosphate)lysine).

Belongs to the trans-sulfuration enzymes family. As to quaternary structure, homotetramer. Pyridoxal 5'-phosphate is required as a cofactor.

It localises to the cytoplasm. The catalysed reaction is O-succinyl-L-homoserine + L-cysteine = L,L-cystathionine + succinate + H(+). Its function is as follows. Catalyzes the formation of L-cystathionine from O-succinyl-L-homoserine (OSHS) and L-cysteine, via a gamma-replacement reaction. In the absence of thiol, catalyzes gamma-elimination to form 2-oxobutanoate, succinate and ammonia. The polypeptide is Cystathionine gamma-synthase (metB) (Helicobacter pylori (strain ATCC 700392 / 26695) (Campylobacter pylori)).